The chain runs to 501 residues: MDGVADLVVIALLGALTLLTAGHVLALRSRSRAVAAQAQQWADRIRADAENAARSHQDRLLAEAAAYRAELDRREQRIAAQEQRIERELRRLDAARRQLDERTAQLDQRAAELARLAEERRAVLEQAAALTAEEAKAALVADIVDQAKREAAVLVRAIERDARTNGEARARRIISLAIQRLAGEQTSESVVRAVPLPEEAMKGRIIGREGRNIRAFETVTGVDLIVDDTPGVVLLSCFHPLRRETARLTLEKLVADGRINPHRIEEAYEASRREVEQQCVRAGEDALLEVGISDMHPELVALLGQLRYRTSYGQNVLAHLVESAHLAGMMAAELGADVPLAKRCALLHDIGKALTHEVEGSHAVIGAQLARRYGECEEVAHAIEAHHNEVEARTVEAVLTQAADAISGGRPGARRASMESYVKRLQRMEEIAYAVSDGVEKVFVMQAGREIRVMVQPEAVDDVQAQVIARDIAKRVEEELTYPGQVRVTVIRESRAVETAR.

A helical transmembrane segment spans residues 7-27 (LVVIALLGALTLLTAGHVLAL). Residues 190-256 (VVRAVPLPEE…RLTLEKLVAD (67 aa)) enclose the KH domain. An HD domain is found at 316–409 (VLAHLVESAH…TQAADAISGG (94 aa)).

This sequence belongs to the RNase Y family.

It localises to the cell membrane. Its function is as follows. Endoribonuclease that initiates mRNA decay. The sequence is that of Ribonuclease Y from Thermobifida fusca (strain YX).